Consider the following 56-residue polypeptide: Ovomucoid (56 aa).

Positions Val6–Cys56 constitute a Kazal-like domain. 3 disulfide bridges follow: Cys8/Cys38, Cys16/Cys35, and Cys24/Cys56. N-linked (GlcNAc...) asparagine glycosylation occurs at Asn45.

Its subcellular location is the secreted. This chain is Ovomucoid, found in Cyrtonyx montezumae (Montezuma quail).